The chain runs to 230 residues: Large ribosomal subunit protein uL1 (230 aa).

Belongs to the universal ribosomal protein uL1 family. As to quaternary structure, part of the 50S ribosomal subunit.

Its function is as follows. Binds directly to 23S rRNA. The L1 stalk is quite mobile in the ribosome, and is involved in E site tRNA release. In terms of biological role, protein L1 is also a translational repressor protein, it controls the translation of the L11 operon by binding to its mRNA. In Acholeplasma laidlawii (strain PG-8A), this protein is Large ribosomal subunit protein uL1.